The primary structure comprises 203 residues: Holliday junction branch migration complex subunit RuvA (203 aa).

The segment at 1–64 is domain I; sequence MIGRLRGIVL…EDAQLLFGFN (64 aa). The domain II stretch occupies residues 65 to 142; it reads NKQERTLFRE…KGLHGDLFTP (78 aa). A flexible linker region spans residues 143 to 154; the sequence is AADLVLTSPASP. The segment at 155-203 is domain III; that stretch reads AVDDAEAEAVAALVSLGYKPQEASRMVSKVAQADASSETLIREALRAAL.

It belongs to the RuvA family. Homotetramer. Forms an RuvA(8)-RuvB(12)-Holliday junction (HJ) complex. HJ DNA is sandwiched between 2 RuvA tetramers; dsDNA enters through RuvA and exits via RuvB. An RuvB hexamer assembles on each DNA strand where it exits the tetramer. Each RuvB hexamer is contacted by two RuvA subunits (via domain III) on 2 adjacent RuvB subunits; this complex drives branch migration. In the full resolvosome a probable DNA-RuvA(4)-RuvB(12)-RuvC(2) complex forms which resolves the HJ.

The protein resides in the cytoplasm. The RuvA-RuvB-RuvC complex processes Holliday junction (HJ) DNA during genetic recombination and DNA repair, while the RuvA-RuvB complex plays an important role in the rescue of blocked DNA replication forks via replication fork reversal (RFR). RuvA specifically binds to HJ cruciform DNA, conferring on it an open structure. The RuvB hexamer acts as an ATP-dependent pump, pulling dsDNA into and through the RuvAB complex. HJ branch migration allows RuvC to scan DNA until it finds its consensus sequence, where it cleaves and resolves the cruciform DNA. This Cronobacter sakazakii (strain ATCC BAA-894) (Enterobacter sakazakii) protein is Holliday junction branch migration complex subunit RuvA.